The primary structure comprises 268 residues: Proenkephalin-A (268 aa).

An N-terminal signal peptide occupies residues 1–24 (MARFLRLCTWLLALGSCLLATVQA). Cystine bridges form between Cys-26–Cys-48, Cys-30–Cys-52, and Cys-33–Cys-65. Residues 163-184 (TGDNRAKDSHQQESTNNDEDMS) are disordered. 2 consecutive propeptides follow at residues 197–208 (SPQLEDEAKELQ) and 218–228 (VGRPEWWMDYQ). Ser-252 bears the Phosphoserine mark.

This sequence belongs to the opioid neuropeptide precursor family. In terms of processing, proenkephalin-A is cleaved by CTSL to generate Met-enkephalin. Processed and degraded by ACE. Post-translationally, probably cleaved by ACE. In terms of processing, processed by ACE to generate Met-enkephalin in the nucleus accumbens of the brain. The N-terminal domain contains 6 conserved cysteines thought to be involved in disulfide bonding and/or processing. As to expression, spermatogenic and somatic cells.

The protein localises to the cytoplasmic vesicle. Its subcellular location is the secretory vesicle. The protein resides in the chromaffin granule lumen. It localises to the secreted. Its function is as follows. Neuropeptide that competes with and mimic the effects of opiate drugs. They play a role in a number of physiologic functions, including pain perception and responses to stress. Met-enkephalin-Arg-Phe neuropeptide acts as a strong ligand of Mu-type opioid receptor OPRM1. Met-enkephalin-Arg-Phe-binding to OPRM1 in the nucleus accumbens of the brain increases activation of OPRM1, leading to long-term synaptic depression of glutamate release. Functionally, increases glutamate release in the striatum and decreases GABA concentration in the striatum. In terms of biological role, increases glutamate release in the striatum. This is Proenkephalin-A (Penk) from Mus musculus (Mouse).